The primary structure comprises 389 residues: Krueppel-like factor 17 (389 aa).

Disordered regions lie at residues 1 to 48 (MYGR…SGVH) and 239 to 279 (LVSQ…GSSE). Positions 26-38 (AQDNENSAPILNM) are enriched in polar residues. Residues 264–278 (KNSRPQEGTGRRGSS) show a composition bias toward basic and acidic residues. 3 consecutive C2H2-type zinc fingers follow at residues 283–307 (YCCNYENCGKAYTKRSHLVSHQRKH), 313–337 (YSCNWESCSWSFFRSDELRRHMRVH), and 343–365 (YKCDQCSREFMRSDHLKQHQKTH). The disordered stretch occupies residues 356–389 (DHLKQHQKTHRPGPSDPQANNNNGEQDSPPAAGP). The span at 372 to 381 (PQANNNNGEQ) shows a compositional bias: polar residues.

Belongs to the Sp1 C2H2-type zinc-finger protein family.

It is found in the nucleus. Its function is as follows. Transcription repressor that binds to the promoter of target genes and prevents their expression. Acts as a negative regulator of epithelial-mesenchymal transition and metastasis in breast cancer. Specifically binds the 5'-CACCC-3' sequence in the promoter of ID1, a key metastasis regulator in breast cancer, and repress its expression. May be a germ cell-specific transcription factor that plays important roles in spermatid differentiation and oocyte development. The sequence is that of Krueppel-like factor 17 (KLF17) from Homo sapiens (Human).